The chain runs to 409 residues: O-methyltransferase pyiA (409 aa).

The segment covering 1–21 (MASQDGTTELLSQSVNSTCIP) has biased composition (polar residues). Positions 1 to 46 (MASQDGTTELLSQSVNSTCIPGSTYHVDRGRASSASTPPTSPPLSE) are disordered. Residue D271 participates in S-adenosyl-L-methionine binding. H317 acts as the Proton acceptor in catalysis.

It belongs to the class I-like SAM-binding methyltransferase superfamily. Cation-independent O-methyltransferase family.

Its pathway is mycotoxin biosynthesis. Its function is as follows. O-methyltransferase; part of the gene cluster that mediates the biosynthesis of the mycotoxin pyrichalasin H, a tyrosine-derived cytochalasan that inhibits the growth of rice seedlings, but also inhibits lymphocyte capping and actin polymerization and alters cell morphology. Pyrichalasin H is indicated as the responsible agent for the genus-specific pathogenicity of M.grisea toward crabgrass. The first step in the pathway is catalyzed by the O-methyltransferase pyiA which methylates free tyrosine to generate the precursor O-methyltyrosine. The hybrid PKS-NRPS pyiS, assisted by the enoyl reductase pyiC, are responsible for fusion of the O-methyltyrosine precursor and the polyketide backbone. The polyketide synthase module (PKS) of pyiS is responsible for the synthesis of the polyketide backbone and the downstream nonribosomal peptide synthetase (NRPS) amidates the carboxyl end of the polyketide with the O-methyltyrosine precursor. As the NRPS A-domain demonstrates substrate tolerance, pyiS can also use phenylalanine, tyrosine and even para-chlorophenylalanine as amino acid precursor, which leads to the production of novel cytochalasans, including halogenated cytochalasans. Because pyiS lacks a designated enoylreductase (ER) domain, the required activity is provided the enoyl reductase pyiC. Reduction by the hydrolyase pyiE leads to 1,5-dihydropyrrolone, which is substrate for dehydration and intra-molecular Diels-Alder cyclization by the Diels-Alderase pyiF to yield the required isoindolone-fused macrocycle. The tailoring cytochrome P450 monooxygenases piyD and piyG catalyze the hydroxylation at C-18 and C-7, respectivily, whereas the short-chain dehydrogenase/reductase pyiH reduces the carbonyl at C-21 in preparation for the transfer of an acetyl group by the acetyltransferase pyiB. These 3 reactions whose order is not clear yet, lead to the production of O-methylpyrichalasin J, a deacetylated pyrichalasin H. Finally, pyiB to converts O-methylpyrichalasin J into the final product pyrichalasin H via acetylation of C-21. In Pyricularia grisea (Crabgrass-specific blast fungus), this protein is O-methyltransferase pyiA.